The sequence spans 447 residues: N-succinylarginine dihydrolase (447 aa).

Substrate is bound by residues 19-28 (AGLSFGNEAS), N110, and 137-138 (HR). The active site involves E174. R212 provides a ligand contact to substrate. Residue H248 is part of the active site. Positions 250 and 359 each coordinate substrate. The Nucleophile role is filled by C365.

The protein belongs to the succinylarginine dihydrolase family. Homodimer.

The enzyme catalyses N(2)-succinyl-L-arginine + 2 H2O + 2 H(+) = N(2)-succinyl-L-ornithine + 2 NH4(+) + CO2. The protein operates within amino-acid degradation; L-arginine degradation via AST pathway; L-glutamate and succinate from L-arginine: step 2/5. In terms of biological role, catalyzes the hydrolysis of N(2)-succinylarginine into N(2)-succinylornithine, ammonia and CO(2). This is N-succinylarginine dihydrolase from Salmonella gallinarum (strain 287/91 / NCTC 13346).